Reading from the N-terminus, the 255-residue chain is MWQGCAVERPVGRMTSQTPLPQSPRPRRPTMSTVVELNVGGEFHTTTLGTLRKFPGSKLAEMFSSLAKASTDAEGRFFIDRPSTYFRPILDYLRTGQVPTQHIPEVYREAQFYEIKPLVKLLEDMPQIFGEQVSRKQFLLQVPGYSENLELMVRLARAEAITARKSSVLVCLVETEEQDAYYSEVLCFLQDKKMFKSVVKFGPWKAVLDNSDLMHCLEMDIKAQGYKVFSKFYLTYPTKRNEFHFNIYSFTFTWW.

Residues 1–29 (MWQGCAVERPVGRMTSQTPLPQSPRPRRP) form a disordered region. Positions 33–130 (TVVELNVGGE…LLEDMPQIFG (98 aa)) constitute a BTB domain.

The protein is BTB/POZ domain-containing protein KCTD14 (KCTD14) of Homo sapiens (Human).